Consider the following 368-residue polypeptide: Phospho-N-acetylmuramoyl-pentapeptide-transferase (368 aa).

Transmembrane regions (helical) follow at residues Thr32–Asp52, Thr79–Ala99, Leu102–Tyr122, Thr140–Gly160, Val176–Gly196, Gly207–Ala227, Leu247–Pro267, Ile271–Ala291, Ile296–Val316, and Gln345–Leu365.

The protein belongs to the glycosyltransferase 4 family. MraY subfamily. Mg(2+) is required as a cofactor.

The protein localises to the cell inner membrane. It catalyses the reaction UDP-N-acetyl-alpha-D-muramoyl-L-alanyl-gamma-D-glutamyl-meso-2,6-diaminopimeloyl-D-alanyl-D-alanine + di-trans,octa-cis-undecaprenyl phosphate = di-trans,octa-cis-undecaprenyl diphospho-N-acetyl-alpha-D-muramoyl-L-alanyl-D-glutamyl-meso-2,6-diaminopimeloyl-D-alanyl-D-alanine + UMP. It participates in cell wall biogenesis; peptidoglycan biosynthesis. Functionally, catalyzes the initial step of the lipid cycle reactions in the biosynthesis of the cell wall peptidoglycan: transfers peptidoglycan precursor phospho-MurNAc-pentapeptide from UDP-MurNAc-pentapeptide onto the lipid carrier undecaprenyl phosphate, yielding undecaprenyl-pyrophosphoryl-MurNAc-pentapeptide, known as lipid I. The sequence is that of Phospho-N-acetylmuramoyl-pentapeptide-transferase from Nitrobacter hamburgensis (strain DSM 10229 / NCIMB 13809 / X14).